The chain runs to 213 residues: Kynurenine formamidase (213 aa).

Tryptophan 18 provides a ligand contact to substrate. Zn(2+) contacts are provided by histidine 48, histidine 52, and aspartate 54. The active-site Proton donor/acceptor is the histidine 58. Positions 160 and 172 each coordinate Zn(2+).

This sequence belongs to the Cyclase 1 superfamily. KynB family. As to quaternary structure, homodimer. The cofactor is Zn(2+).

It carries out the reaction N-formyl-L-kynurenine + H2O = L-kynurenine + formate + H(+). It functions in the pathway amino-acid degradation; L-tryptophan degradation via kynurenine pathway; L-kynurenine from L-tryptophan: step 2/2. Functionally, catalyzes the hydrolysis of N-formyl-L-kynurenine to L-kynurenine, the second step in the kynurenine pathway of tryptophan degradation. The chain is Kynurenine formamidase from Burkholderia mallei (strain NCTC 10247).